The chain runs to 150 residues: Globin-1 (150 aa).

The 140-residue stretch at 11-150 folds into the Globin domain; sequence PLSDAEKNKI…MICILLSSAY (140 aa). The heme b site is built by H74 and H106.

The protein belongs to the globin family. As to quaternary structure, monomer.

This Mordacia mordax (Southern hemisphere lamprey) protein is Globin-1.